The primary structure comprises 346 residues: Nicotinate-nucleotide--dimethylbenzimidazole phosphoribosyltransferase (346 aa).

The active-site Proton acceptor is Glu312.

The protein belongs to the CobT family.

It catalyses the reaction 5,6-dimethylbenzimidazole + nicotinate beta-D-ribonucleotide = alpha-ribazole 5'-phosphate + nicotinate + H(+). The protein operates within nucleoside biosynthesis; alpha-ribazole biosynthesis; alpha-ribazole from 5,6-dimethylbenzimidazole: step 1/2. Functionally, catalyzes the synthesis of alpha-ribazole-5'-phosphate from nicotinate mononucleotide (NAMN) and 5,6-dimethylbenzimidazole (DMB). This chain is Nicotinate-nucleotide--dimethylbenzimidazole phosphoribosyltransferase, found in Cupriavidus taiwanensis (strain DSM 17343 / BCRC 17206 / CCUG 44338 / CIP 107171 / LMG 19424 / R1) (Ralstonia taiwanensis (strain LMG 19424)).